The primary structure comprises 241 residues: Small ribosomal subunit protein eS4 (241 aa).

The S4 RNA-binding domain maps to 37 to 100; that stretch reads LPIVVWARDQ…GKHYRILRDK (64 aa).

This sequence belongs to the eukaryotic ribosomal protein eS4 family.

In Methanospirillum hungatei JF-1 (strain ATCC 27890 / DSM 864 / NBRC 100397 / JF-1), this protein is Small ribosomal subunit protein eS4.